The chain runs to 342 residues: Aquaporin-7 (342 aa).

Residues 1 to 36 are Cytoplasmic-facing; it reads MVQTSRHRRSTRGSKMVSWSVMAKIQEILQKKMVRE. Phosphoserine is present on serine 20. A helical membrane pass occupies residues 37-54; that stretch reads FLAEFMSTYVMMVFGLGS. Residues 55–67 lie on the Extracellular side of the membrane; the sequence is VAHMVLNKKYGSY. Residues 68–85 traverse the membrane as a helical segment; it reads LGVNLGFGFGVTMGVHVA. The Cytoplasmic portion of the chain corresponds to 86 to 89; it reads GHIS. An intramembrane region (discontinuously helical) is located at residues 90-103; the sequence is GAHMNAAVTFANCA. Residues 94 to 96 carry the NPA 1 motif; sequence NAA. Residues 104-111 are Cytoplasmic-facing; it reads LGRVPWRK. Residues 112–132 traverse the membrane as a helical segment; the sequence is FPVYVLGQFLGSFLAAATIYT. Topologically, residues 133-167 are extracellular; it reads LFYTAILHFSGGQLMVTGPVATAGIFATYLPDHMT. A helical transmembrane segment spans residues 168–188; it reads LWRGFLNEAWLTGMLQLCLFA. Topologically, residues 189–200 are cytoplasmic; the sequence is ITDQENNAALPG. Residues 201–217 traverse the membrane as a helical segment; sequence TQALVIGILVVIIGVSL. Residues 218-221 lie on the Extracellular side of the membrane; sequence GMNT. Residues 222 to 235 constitute an intramembrane region (discontinuously helical); the sequence is GYAINPSRDLPPRV. Residues 226 to 228 carry the NPA 2 motif; that stretch reads NPS. Residues 236–253 are Extracellular-facing; it reads FTFIAGWGKEVFSEGENW. The chain crosses the membrane as a helical span at residues 254–275; the sequence is WWVPVVAPLLGACLGGIIYLVF. Residues 276–342 lie on the Cytoplasmic side of the membrane; sequence IGSTTPREPL…LHESMALGHF (67 aa).

The protein belongs to the MIP/aquaporin (TC 1.A.8) family. As to quaternary structure, homotetramer; each monomer provides an independent glycerol/water pore. Two homotetramers on opposing membranes can dimerize, forming a cell-cell junction. Interacts with PLIN1. In terms of processing, phosphorylation by PKA could prevent the interaction with PLIN1.

It localises to the cell membrane. The protein localises to the cytoplasmic vesicle membrane. It is found in the lipid droplet. The enzyme catalyses glycerol(in) = glycerol(out). The catalysed reaction is H2O(in) = H2O(out). It carries out the reaction urea(in) = urea(out). Its activity is regulated as follows. Glycerol transport is regulated by pH, with the porin being permeable to glycerol at pH 7.4 but not at pH 5.5. Water permeability, however, is not influenced by pH. Aquaglyceroporins form homotetrameric transmembrane channels, with each monomer independently mediating glycerol and water transport across the plasma membrane along their osmotic gradient. Could also be permeable to urea. Mediates the efflux of glycerol, formed upon triglyceride hydrolysis, to avoid its accumulation in adipocytes and to make it available to other tissues. In the kidney, mediates the reabsorption of glycerol, preventing its loss in urine, again participating to energy homeostasis. In pancreatic beta cells, it also mediates the efflux of glycerol, regulating its intracellular levels. The protein is Aquaporin-7 (AQP7) of Macaca fascicularis (Crab-eating macaque).